A 1047-amino-acid chain; its full sequence is Suppression of tumorigenicity 18 protein (1047 aa).

Disordered regions lie at residues 41–92, 168–221, and 251–286; these read TAED…HSTA, FLIH…VPKY, and DSETERKDPQNALAEPLDGNAQPSFPDVEEEDSESL. Positions 52–65 are enriched in basic residues; it reads NKRKSLLMKPRHYS. Positions 171–181 are enriched in basic and acidic residues; that stretch reads HSDDGRDKIDD. 2 consecutive CCHHC-type zinc fingers follow at residues 359 to 402 and 403 to 446; these read PRPE…PLEI and LAMH…KLAM. The Zn(2+) site is built by Cys368, Cys373, His386, Cys392, Cys412, Cys417, His430, and Cys436. Disordered regions lie at residues 523–563 and 672–710; these read GRKT…SYSY and YSKTHGKTEEEKEKDPVSSLENLEEKKFPGEASIPSPKP. A compositionally biased stretch (polar residues) spans 550 to 563; the sequence is AHTQSPGRASSYSY. The segment covering 677 to 687 has biased composition (basic and acidic residues); that stretch reads GKTEEEKEKDP. CCHHC-type zinc fingers lie at residues 715–758, 759–802, 807–850, and 860–903; these read RDLK…LKSL, MAAN…GVKM, EEKE…QKEN, and KLNK…IKKG. Zn(2+) is bound by residues Cys724, Cys729, His742, Cys748, Cys768, Cys773, His786, Cys792, Cys816, Cys821, His834, Cys840, Cys869, Cys874, His887, and Cys893. Positions 920–992 form a coiled coil; that stretch reads IESDEEIRHL…AGLSQALISS (73 aa).

This sequence belongs to the MYT1 family. In terms of tissue distribution, detected at low levels in heart, liver, kidney, skeletal muscle, pancreas, testis, ovary and prostate. Detected at even lower levels in mammary epithelial cells and breast cancer cells.

The protein resides in the nucleus. Repressor that binds to DNA sequences containing a bipartite element consisting of a direct repeat of the sequence 5'-AAAGTTT-3' separated by 2-9 nucleotides. Represses basal transcription activity from target promoters. Inhibits colony formation in cultured breast cancer cells. The polypeptide is Suppression of tumorigenicity 18 protein (ST18) (Homo sapiens (Human)).